We begin with the raw amino-acid sequence, 239 residues long: MIEEQSDNVENKDENVSMDNNISENLPIAEEQTNEDKKLPDDNNEKIDAEDLKNTITNNDARLEQLEKEHETLKSQYVRIAADFDNFRKRQSRDQDDLKIQLVSKALTAILPIVDNFERARQQLKPEGDEAQTLHRSYQGLYKQLVEVLKQQGVAPMRVVGQQFDPNLHEAVLREPSEEQNEDIIIEELQRGYHLEGKVLRHALVKVSMGPGQQISQESEEKDKVDKDIDSEGSISEEN.

Disordered regions lie at residues 1-53 (MIEE…EDLK) and 210-239 (GPGQ…SEEN). Basic and acidic residues-rich tracts occupy residues 34–53 (NEDK…EDLK) and 219–230 (SEEKDKVDKDID).

Belongs to the GrpE family. As to quaternary structure, homodimer.

It localises to the cytoplasm. Functionally, participates actively in the response to hyperosmotic and heat shock by preventing the aggregation of stress-denatured proteins, in association with DnaK and GrpE. It is the nucleotide exchange factor for DnaK and may function as a thermosensor. Unfolded proteins bind initially to DnaJ; upon interaction with the DnaJ-bound protein, DnaK hydrolyzes its bound ATP, resulting in the formation of a stable complex. GrpE releases ADP from DnaK; ATP binding to DnaK triggers the release of the substrate protein, thus completing the reaction cycle. Several rounds of ATP-dependent interactions between DnaJ, DnaK and GrpE are required for fully efficient folding. The chain is Protein GrpE from Prochlorococcus marinus (strain MIT 9515).